We begin with the raw amino-acid sequence, 770 residues long: Probable zinc transporter protein DDB_G0291141 (770 aa).

The Cytoplasmic segment spans residues 1–36 (MAGSLDDSIYNNGRSGGGGGGFKFSKGFNKDSISKR). Residues 37 to 57 (IIMMLFFSKGIRAWSCIILLY) form a helical membrane-spanning segment. Residues 58 to 62 (FLQSS) are Extracellular-facing. Residues 63–83 (ISIISASFYMCLFSAIFSVVV) form a helical membrane-spanning segment. Residues 84–100 (EKPWNLLSSLRPSQIKK) lie on the Cytoplasmic side of the membrane. The helical transmembrane segment at 101–117 (IIYHSIFNLLIIITWNS) threads the bilayer. Residues 118 to 123 (SIKFIG) lie on the Extracellular side of the membrane. The helical transmembrane segment at 124-146 (PIGSILASDYTFSTYPLIFNSLL) threads the bilayer. The Cytoplasmic portion of the chain corresponds to 147–154 (QGNFLATD). The helical transmembrane segment at 155-175 (MSRGSIMLMIGYFLIPLFGIS) threads the bilayer. At 176–184 (NRLDILGYT) the chain is on the extracellular side. A helical membrane pass occupies residues 185 to 205 (SSQVFMIGLFSLIVHNVLVLW). Residues 206 to 224 (KKTIVRSWNSGSSGGKNKL) are Cytoplasmic-facing. Residues 225 to 245 (SSLGSCVSTIILFVFKLFEGF) form a helical membrane-spanning segment. At 246-262 (SSGSSGSDSINQVSYSQ) the chain is on the extracellular side. The chain crosses the membrane as a helical span at residues 263 to 283 (LFVIAIITFILYSLNQFIDDV). At 284-291 (SEKELTFN) the chain is on the cytoplasmic side. A helical membrane pass occupies residues 292–312 (VLSKVSLTSSVIFGLLAALFI). Residues 313–316 (GFKD) are Extracellular-facing. Residues 317–337 (FFHPILILSFIFIINAIHILY) traverse the membrane as a helical segment. The Cytoplasmic portion of the chain corresponds to 338-404 (SKSNDIQPMT…QIVDKPTSRR (67 aa)). A helical membrane pass occupies residues 405 to 425 (IFTFLVINLMFMFVEMAYGIW). Residues 426 to 434 (TNSLGLITD) lie on the Extracellular side of the membrane. The helical transmembrane segment at 435–455 (ACHMFFDATALFIALVAEVIS) threads the bilayer. The Cytoplasmic segment spans residues 456–469 (QWKQNDKYSYGYGR). A helical membrane pass occupies residues 470 to 490 (FQVLSGFVNGIFLIFIAVTIL). The Extracellular segment spans residues 491 to 507 (MESVERLLEPPEINTDK). A helical membrane pass occupies residues 508-528 (LLLVSVLGFIINLIGIFSFHG). Residues 529–592 (DHGHSHGGGG…GVFLHLLADT (64 aa)) lie on the Cytoplasmic side of the membrane. The disordered stretch occupies residues 532-566 (HSHGGGGGHSHGGGEKKEKHHGHSHGGHGDHQQVT). The chain crosses the membrane as a helical span at residues 593–613 (LGSVGVIVSSLIIQIWGYTLA). Residue Asp-614 is a topological domain, extracellular. The helical transmembrane segment at 615-635 (PICSLLISILIFLSVLPLIAN) threads the bilayer. Residues 636-770 (TAKTLLQCTP…SSSSHHHRHN (135 aa)) lie on the Cytoplasmic side of the membrane. Residues 751-770 (DIHHNHSSSSSSSSHHHRHN) form a disordered region.

This sequence belongs to the cation diffusion facilitator (CDF) transporter (TC 2.A.4) family. SLC30A subfamily.

It localises to the membrane. In terms of biological role, may be involved in zinc transport from the cytoplasm to either intracellular organelles or extracellular spaces. This is Probable zinc transporter protein DDB_G0291141 from Dictyostelium discoideum (Social amoeba).